The chain runs to 176 residues: Envelope protein 167 (176 aa).

Position 1 (Met-1) is a topological domain, intravirion. Residues 2 to 22 (YLVLLIAIILFITIILVIFLI) form a helical membrane-spanning segment. Residues 23–176 (SGLFYPEQNP…AVMAIPRKVL (154 aa)) are Virion surface-facing.

It belongs to the asfivirus envelope protein p22 family.

It localises to the virion membrane. Its subcellular location is the host cell membrane. This is Envelope protein 167 from African swine fever virus (isolate Warthog/Namibia/Wart80/1980) (ASFV).